A 147-amino-acid chain; its full sequence is MRFIVGRRGGQTGADAADETFTTLAGLLKRGNSYAHAASALILVCADEGEDERTARYAAVDAGAAIAQLTIEAVSRGLIAHPMAGFDVERPAAFGVPDGVRPFAVVALGHLGDYATADEAIAERDSRPRERLALEQVAFTGRWGNPL.

This is an uncharacterized protein from Mycolicibacterium smegmatis (Mycobacterium smegmatis).